Reading from the N-terminus, the 160-residue chain is Endoribonuclease YbeY (160 aa).

3 residues coordinate Zn(2+): H121, H125, and H131.

The protein belongs to the endoribonuclease YbeY family. It depends on Zn(2+) as a cofactor.

It is found in the cytoplasm. Its function is as follows. Single strand-specific metallo-endoribonuclease involved in late-stage 70S ribosome quality control and in maturation of the 3' terminus of the 16S rRNA. The polypeptide is Endoribonuclease YbeY (Syntrophus aciditrophicus (strain SB)).